We begin with the raw amino-acid sequence, 132 residues long: uncharacterized protein (132 aa).

The signal sequence occupies residues 1-18; sequence MRKIISMLFIPLFIFAMA.

This is an uncharacterized protein from Aquifex aeolicus (strain VF5).